Here is a 261-residue protein sequence, read N- to C-terminus: tRNA pseudouridine synthase A (261 aa).

The active-site Nucleophile is the Asp-51. Tyr-109 provides a ligand contact to substrate.

The protein belongs to the tRNA pseudouridine synthase TruA family. As to quaternary structure, homodimer.

The enzyme catalyses uridine(38/39/40) in tRNA = pseudouridine(38/39/40) in tRNA. In terms of biological role, formation of pseudouridine at positions 38, 39 and 40 in the anticodon stem and loop of transfer RNAs. This is tRNA pseudouridine synthase A from Haemophilus ducreyi (strain 35000HP / ATCC 700724).